Here is a 160-residue protein sequence, read N- to C-terminus: UPF0225 protein CGSHiEE_01665 (160 aa).

It belongs to the UPF0225 family.

This Haemophilus influenzae (strain PittEE) protein is UPF0225 protein CGSHiEE_01665.